A 172-amino-acid chain; its full sequence is Large ribosomal subunit protein uL10 (172 aa).

It belongs to the universal ribosomal protein uL10 family. Part of the ribosomal stalk of the 50S ribosomal subunit. The N-terminus interacts with L11 and the large rRNA to form the base of the stalk. The C-terminus forms an elongated spine to which L12 dimers bind in a sequential fashion forming a multimeric L10(L12)X complex.

Forms part of the ribosomal stalk, playing a central role in the interaction of the ribosome with GTP-bound translation factors. This is Large ribosomal subunit protein uL10 from Rhodopseudomonas palustris (strain HaA2).